The primary structure comprises 207 residues: Large ribosomal subunit protein uL4 (207 aa).

A disordered region spans residues 49-78 (HAVKNRSAVSGGGRKPWRQKGTGRARQGSI).

Belongs to the universal ribosomal protein uL4 family. Part of the 50S ribosomal subunit.

Functionally, one of the primary rRNA binding proteins, this protein initially binds near the 5'-end of the 23S rRNA. It is important during the early stages of 50S assembly. It makes multiple contacts with different domains of the 23S rRNA in the assembled 50S subunit and ribosome. In terms of biological role, forms part of the polypeptide exit tunnel. In Streptococcus pyogenes serotype M1, this protein is Large ribosomal subunit protein uL4 (rplD).